The sequence spans 256 residues: Thiazole synthase (256 aa).

Catalysis depends on Lys96, which acts as the Schiff-base intermediate with DXP. 1-deoxy-D-xylulose 5-phosphate-binding positions include Gly157, 183–184 (AG), and 205–206 (NT).

It belongs to the ThiG family. Homotetramer. Forms heterodimers with either ThiH or ThiS.

It localises to the cytoplasm. It catalyses the reaction [ThiS sulfur-carrier protein]-C-terminal-Gly-aminoethanethioate + 2-iminoacetate + 1-deoxy-D-xylulose 5-phosphate = [ThiS sulfur-carrier protein]-C-terminal Gly-Gly + 2-[(2R,5Z)-2-carboxy-4-methylthiazol-5(2H)-ylidene]ethyl phosphate + 2 H2O + H(+). It participates in cofactor biosynthesis; thiamine diphosphate biosynthesis. Its function is as follows. Catalyzes the rearrangement of 1-deoxy-D-xylulose 5-phosphate (DXP) to produce the thiazole phosphate moiety of thiamine. Sulfur is provided by the thiocarboxylate moiety of the carrier protein ThiS. In vitro, sulfur can be provided by H(2)S. The protein is Thiazole synthase of Bacillus cereus (strain AH187).